A 604-amino-acid chain; its full sequence is Prostaglandin G/H synthase 2 (604 aa).

Positions 1–17 (MLARALLLCAAVALSGA) are cleaved as a signal peptide. The 38-residue stretch at 18-55 (ANPCCSHPCQNRGVCMSVGFDQYKCDCTRTGFYGENCT) folds into the EGF-like domain. Disulfide bonds link Cys-21–Cys-32, Cys-22–Cys-145, Cys-26–Cys-42, and Cys-44–Cys-54. Asn-53 is a glycosylation site (N-linked (GlcNAc...) asparagine). Arg-106 provides a ligand contact to substrate. N-linked (GlcNAc...) asparagine glycosylation is present at Asn-130. His-193 acts as the Proton acceptor in catalysis. Tyr-341 contributes to the substrate binding site. Tyr-371 acts as the For cyclooxygenase activity in catalysis. His-374 contributes to the heme b binding site. Asn-396 carries an N-linked (GlcNAc...) asparagine glycan. Cys-526 is subject to S-nitrosocysteine. A disulfide bond links Cys-555 and Cys-561. Ser-565 bears the O-acetylserine mark. N-linked (GlcNAc...) asparagine glycosylation occurs at Asn-580.

The protein belongs to the prostaglandin G/H synthase family. As to quaternary structure, homodimer. Requires heme b as cofactor. S-nitrosylation by NOS2 (iNOS) activates enzyme activity. S-nitrosylation may take place on different Cys residues in addition to Cys-526. In terms of processing, acetylated at Ser-565 by SPHK1. During neuroinflammation, acetylation by SPHK1 promotes neuronal secretion of specialized preresolving mediators (SPMs), especially 15-R-lipoxin A4, which results in an increase of phagocytic microglia.

It localises to the microsome membrane. The protein resides in the endoplasmic reticulum membrane. Its subcellular location is the nucleus inner membrane. The protein localises to the nucleus outer membrane. The catalysed reaction is (5Z,8Z,11Z,14Z)-eicosatetraenoate + AH2 + 2 O2 = prostaglandin H2 + A + H2O. The enzyme catalyses (5Z,8Z,11Z,14Z)-eicosatetraenoate + 2 O2 = prostaglandin G2. It carries out the reaction prostaglandin G2 + AH2 = prostaglandin H2 + A + H2O. It catalyses the reaction (5Z,8Z,11Z,14Z,17Z)-eicosapentaenoate + 2 O2 = prostaglandin G3. The catalysed reaction is prostaglandin G3 + AH2 = prostaglandin H3 + A + H2O. The enzyme catalyses (8Z,11Z,14Z)-eicosatrienoate + 2 O2 = prostaglandin G1. It carries out the reaction prostaglandin G1 + AH2 = prostaglandin H1 + A + H2O. It catalyses the reaction 2-(5Z,8Z,11Z,14Z)-eicosatetraenoyl-sn-glycero-3-phosphoethanolamine + 2 O2 = 2-(prostaglandin G2)-sn-glycero-3-phosphoethanolamine. The catalysed reaction is 2-(prostaglandin G2)-sn-glycero-3-phosphoethanolamine + AH2 = 2-(prostaglandin H2)-sn-glycero-3-phosphoethanolamine + A + H2O. The enzyme catalyses 2-(5Z,8Z,11Z,14Z)-eicosatetraenoyl-sn-glycero-3-phosphocholine + 2 O2 = 2-(prostaglandin G2)-sn-glycero-3-phosphocholine. It carries out the reaction 2-(prostaglandin G2)-sn-glycero-3-phosphocholine + AH2 = 2-(prostaglandin H2)-sn-glycero-3-phosphocholine + A + H2O. It catalyses the reaction (15S)-hydroperoxy-(5Z,8Z,11Z,13E)-eicosatetraenoate + AH2 = (15S)-hydroxy-(5Z,8Z,11Z,13E)-eicosatetraenoate + A + H2O. The catalysed reaction is 2-(5Z,8Z,11Z,14Z)-eicosatetraenoyl-sn-glycero-3-phosphocholine + AH2 + O2 = 2-[(15S)-hydroxy-(5Z,8Z,11Z,13E)-eicosatetraenoyl]-sn-glycero-3-phosphocholine + A + H2O. The enzyme catalyses 2-(5Z,8Z,11Z,14Z)-eicosatetraenoyl-sn-glycero-3-phosphocholine + AH2 + O2 = 2-[(15R)-hydroxy-(5Z,8Z,11Z,13E)-eicosatetraenoyl]-sn-glycero-3-phosphocholine + A + H2O. It carries out the reaction 2-(5Z,8Z,11Z,14Z)-eicosatetraenoyl-sn-glycero-3-phosphocholine + AH2 + O2 = 2-[(11R)-hydroxy-(5Z,8Z,12E,14Z)-eicosatetraenoyl]-sn-glycero-3-phosphocholine + A + H2O. It catalyses the reaction (9Z,12Z)-octadecadienoate + AH2 + O2 = 9-hydroxy-(10E,12Z)-octadecadienoate + A + H2O. The catalysed reaction is (9Z,12Z)-octadecadienoate + AH2 + O2 = 13-hydroxy-(9Z,11E)-octadecadienoate + A + H2O. The enzyme catalyses (5Z,8Z,11Z,14Z)-eicosatetraenoate + AH2 + O2 = (15R)-hydroxy-(5Z,8Z,11Z,13E)-eicosatetraenoate + A + H2O. It carries out the reaction (5Z,8Z,11Z,14Z)-eicosatetraenoate + AH2 + O2 = (11R)-hydroxy-(5Z,8Z,12E,14Z)-eicosatetraenoate + A + H2O. It catalyses the reaction (5Z,8Z,11Z,14Z,17Z)-eicosapentaenoate + AH2 + O2 = (11R)-hydroxy-(5Z,8Z,12E,14Z,17Z)-eicosapentaenoate + A + H2O. The catalysed reaction is (5Z,8Z,11Z,14Z,17Z)-eicosapentaenoate + AH2 + O2 = (18S)-hydroxy-(5Z,8Z,11Z,14Z,16E)-eicosapentaenoate + A + H2O. The enzyme catalyses (5Z,8Z,11Z,14Z,17Z)-eicosapentaenoate + AH2 + O2 = (18R)-hydroxy-(5Z,8Z,11Z,14Z,16E)-eicosapentaenoate + A + H2O. It carries out the reaction (5Z,8Z,11Z,14Z,17Z)-eicosapentaenoate + AH2 + O2 = (15R)-hydroxy-(5Z,8Z,11Z,13E,17Z)-eicosapentaenoate + A + H2O. It catalyses the reaction (5Z,8Z,11Z,14Z,17Z)-eicosapentaenoate + AH2 + O2 = (15S)-hydroxy-(5Z,8Z,11Z,13E,17Z)-eicosapentaenoate + A + H2O. The catalysed reaction is (7Z,10Z,13Z,16Z,19Z)-docosapentaenoate + AH2 + O2 = 13R-hydroxy-(7Z,10Z,14E,16Z,19Z)-docosapentaenoate + A + H2O. The enzyme catalyses (4Z,7Z,10Z,13Z,16Z,19Z)-docosahexaenoate + AH2 + O2 = 13-hydroxy-(4Z,7Z,10Z,14E,16Z,19Z)-docosahexaenoate + A + H2O. It carries out the reaction (5S)-hydroxy-(6E,8Z,11Z,14Z)-eicosatetraenoate + AH2 + O2 = (5S,15R)-dihydroxy-(6E,8Z,11Z,13E)-eicosatetraenoate + A + H2O. It catalyses the reaction (4Z,7Z,10Z,13Z,16Z,19Z)-docosahexaenoate + AH2 + O2 = 17R-hydroxy-(4Z,7Z,10Z,13Z,15E,19Z)-docosahexaenoate + A + H2O. The catalysed reaction is (5S)-hydroxy-(6E,8Z,11Z,14Z)-eicosatetraenoate + AH2 + O2 = (5S,15S)-dihydroxy-(6E,8Z,11Z,13E)-eicosatetraenoate + A + H2O. The enzyme catalyses (5S)-hydroxy-(6E,8Z,11Z,14Z)-eicosatetraenoate + AH2 + O2 = (5S,11R)-dihydroxy-(6E,8Z,12E,14Z)-eicosatetraenoate + A + H2O. It carries out the reaction 2-(5Z,8Z,11Z,14Z-eicosatetraenoyl)-glycerol + 2 O2 = 2-glyceryl-prostaglandin G2. It catalyses the reaction 2-glyceryl-prostaglandin G2 + AH2 = 2-glyceryl-prostaglandin H2 + A + H2O. The catalysed reaction is (5Z,8Z,11Z,14Z)-eicosatetraenoate + O2 = (15R)-hydroperoxy-(5Z,8Z,11Z,13E)-eicosatetraenoate. The enzyme catalyses (5Z,8Z,11Z,14Z)-eicosatetraenoate + O2 = 11R-hydroperoxy-(5Z,8Z,12E,14Z)-eicosatetraenoate. It carries out the reaction (9Z,12Z)-octadecadienoate + AH2 + O2 = (9R)-hydroxy-(10E,12Z)-octadecadienoate + A + H2O. It catalyses the reaction (9Z,12Z)-octadecadienoate + AH2 + O2 = (9S)-hydroxy-(10E,12Z)-octadecadienoate + A + H2O. The catalysed reaction is (9Z,12Z)-octadecadienoate + AH2 + O2 = (13S)-hydroxy-(9Z,11E)-octadecadienoate + A + H2O. The enzyme catalyses (9Z,12Z)-octadecadienoate + AH2 + O2 = (13R)-hydroxy-(9Z,11E)-octadecadienoate + A + H2O. It participates in lipid metabolism; prostaglandin biosynthesis. In terms of biological role, dual cyclooxygenase and peroxidase in the biosynthesis pathway of prostanoids, a class of C20 oxylipins mainly derived from arachidonate ((5Z,8Z,11Z,14Z)-eicosatetraenoate, AA, C20:4(n-6)), with a particular role in the inflammatory response. The cyclooxygenase activity oxygenates AA to the hydroperoxy endoperoxide prostaglandin G2 (PGG2), and the peroxidase activity reduces PGG2 to the hydroxy endoperoxide prostaglandin H2 (PGH2), the precursor of all 2-series prostaglandins and thromboxanes. This complex transformation is initiated by abstraction of hydrogen at carbon 13 (with S-stereochemistry), followed by insertion of molecular O2 to form the endoperoxide bridge between carbon 9 and 11 that defines prostaglandins. The insertion of a second molecule of O2 (bis-oxygenase activity) yields a hydroperoxy group in PGG2 that is then reduced to PGH2 by two electrons. Similarly catalyzes successive cyclooxygenation and peroxidation of dihomo-gamma-linoleate (DGLA, C20:3(n-6)) and eicosapentaenoate (EPA, C20:5(n-3)) to corresponding PGH1 and PGH3, the precursors of 1- and 3-series prostaglandins. In an alternative pathway of prostanoid biosynthesis, converts 2-arachidonoyl lysophopholipids to prostanoid lysophopholipids, which are then hydrolyzed by intracellular phospholipases to release free prostanoids. Metabolizes 2-arachidonoyl glycerol yielding the glyceryl ester of PGH2, a process that can contribute to pain response. Generates lipid mediators from n-3 and n-6 polyunsaturated fatty acids (PUFAs) via a lipoxygenase-type mechanism. Oxygenates PUFAs to hydroperoxy compounds and then reduces them to corresponding alcohols. Plays a role in the generation of resolution phase interaction products (resolvins) during both sterile and infectious inflammation. Metabolizes docosahexaenoate (DHA, C22:6(n-3)) to 17R-HDHA, a precursor of the D-series resolvins (RvDs). As a component of the biosynthetic pathway of E-series resolvins (RvEs), converts eicosapentaenoate (EPA, C20:5(n-3)) primarily to 18S-HEPE that is further metabolized by ALOX5 and LTA4H to generate 18S-RvE1 and 18S-RvE2. In vascular endothelial cells, converts docosapentaenoate (DPA, C22:5(n-3)) to 13R-HDPA, a precursor for 13-series resolvins (RvTs) shown to activate macrophage phagocytosis during bacterial infection. In activated leukocytes, contributes to oxygenation of hydroxyeicosatetraenoates (HETE) to diHETES (5,15-diHETE and 5,11-diHETE). Can also use linoleate (LA, (9Z,12Z)-octadecadienoate, C18:2(n-6)) as substrate and produce hydroxyoctadecadienoates (HODEs) in a regio- and stereospecific manner, being (9R)-HODE ((9R)-hydroxy-(10E,12Z)-octadecadienoate) and (13S)-HODE ((13S)-hydroxy-(9Z,11E)-octadecadienoate) its major products. During neuroinflammation, plays a role in neuronal secretion of specialized preresolving mediators (SPMs) 15R-lipoxin A4 that regulates phagocytic microglia. In Bos taurus (Bovine), this protein is Prostaglandin G/H synthase 2 (PTGS2).